The sequence spans 60 residues: LKCHKLVPPFWKTCPEGKNLCYKMYMVATPMLPVKRGCIDVCPKDSALVKYMCCNTNKCN.

4 cysteine pairs are disulfide-bonded: Cys3–Cys21, Cys14–Cys38, Cys42–Cys53, and Cys54–Cys59.

The protein belongs to the three-finger toxin family. Short-chain subfamily. Type IA cytotoxin sub-subfamily. As to quaternary structure, monomer in solution; Homodimer and oligomer in the presence of negatively charged lipids forming a pore with a size ranging between 20 and 30 Angstroms. Expressed by the venom gland.

The protein localises to the secreted. It is found in the target cell membrane. Its function is as follows. Shows cytolytic activity on many different cells by forming pore in lipid membranes. In vivo, increases heart rate or kills the animal by cardiac arrest. In addition, it binds to heparin with high affinity, interacts with Kv channel-interacting protein 1 (KCNIP1) in a calcium-independent manner, and binds to integrin alpha-V/beta-3 (ITGAV/ITGB3) with moderate affinity. This chain is Cytotoxin 6, found in Naja annulifera (Banded Egyptian cobra).